Consider the following 1210-residue polypeptide: ATPase family AAA domain-containing protein At1g05910 (1210 aa).

A compositionally biased stretch (polar residues) spans 1–11; sequence MHPKRSSQGDG. Disordered stretches follow at residues 1–32 and 63–291; these read MHPKRSSQGDGSVTKPVRTSDRLRRRPKLHGR and LHKG…RTDD. Residues 97-109 show a composition bias toward acidic residues; sequence DYTDSSGAEDEDM. Residues 130 to 146 show a composition bias toward basic and acidic residues; sequence SRKDMDAELAPRREGLR. A compositionally biased stretch (acidic residues) spans 167–226; the sequence is DTSEEKDGQDETENGNELDDADDGENEVEAEDEGNGEDEGDGEDEGEEDGDDDEEGDEEQ. Over residues 227-244 the composition is skewed to basic and acidic residues; that stretch reads EGRKRYDLRNRAEVRRMP. Positions 276–286 are enriched in basic residues; that stretch reads GGSRPHKRHRF. 422-429 provides a ligand contact to ATP; the sequence is GPPGTGKT. The disordered stretch occupies residues 856–883; the sequence is LNGKPDGPQPLPELPKVPKEPTGPKPAE. One can recognise a Bromo domain in the interval 897-1000; sequence RLRMCLRDVC…DVVHGMLSQM (104 aa). The segment covering 1057 to 1070 has biased composition (basic and acidic residues); it reads DRDYEGLKKPKKTT. A disordered region spans residues 1057–1151; sequence DRDYEGLKKP…EISSRTESVK (95 aa). Polar residues predominate over residues 1080–1090; the sequence is DKSQNQDSGQE. Basic and acidic residues-rich tracts occupy residues 1108-1123 and 1138-1151; these read DGDREDQSEPPSKEAS and KSDKEISSRTESVK.

Belongs to the AAA ATPase family.

The sequence is that of ATPase family AAA domain-containing protein At1g05910 from Arabidopsis thaliana (Mouse-ear cress).